The sequence spans 23 residues: Potassium channel toxin kappa-KTx 1.2 (23 aa).

Intrachain disulfides connect C4-C22 and C8-C18. C22 is subject to Cysteine amide.

The protein belongs to the short scorpion toxin superfamily. Potassium channel inhibitor kappa-KTx family. Kappa-KTx 1 subfamily. The two disulfide isomers globular (C1-C3, C2-C4) and beads (C1-C2, C3-C4) do not show activity on Kv10.1/KCNH1/EAG1. In terms of tissue distribution, expressed by the venom gland.

It localises to the secreted. Functionally, shows weak blocking activity on voltage-gated potassium channels Kv10.1/KCNH1/EAG1 (IC(50)=26 uM), Kv1.2/KCNA2 (Kd=150 uM), Kv1.3/KCNA3 (Kd=40 uM), Kv1.6/KCNA3 (16.6% inhibition at 40 uM toxin). The block is dose-dependent, voltage-independent, and reversible. Also shows a weak inhibitory activity on the plant pathogen F.culmorum growth (IC(50)=18.8-37.7 uM). The sequence is that of Potassium channel toxin kappa-KTx 1.2 from Chersonesometrus fulvipes (Indian black scorpion).